A 317-amino-acid chain; its full sequence is tRNA dimethylallyltransferase (317 aa).

14–21 contributes to the ATP binding site; sequence GPTASGKT. A substrate-binding site is contributed by 16–21; that stretch reads TASGKT. Interaction with substrate tRNA regions lie at residues 39–42 and 163–167; these read DSAL and QRIQR.

The protein belongs to the IPP transferase family. As to quaternary structure, monomer. Requires Mg(2+) as cofactor.

The enzyme catalyses adenosine(37) in tRNA + dimethylallyl diphosphate = N(6)-dimethylallyladenosine(37) in tRNA + diphosphate. In terms of biological role, catalyzes the transfer of a dimethylallyl group onto the adenine at position 37 in tRNAs that read codons beginning with uridine, leading to the formation of N6-(dimethylallyl)adenosine (i(6)A). This Stenotrophomonas maltophilia (strain K279a) protein is tRNA dimethylallyltransferase.